The primary structure comprises 658 residues: Putative phospholipase B-like lamina ancestor (658 aa).

A signal peptide spans 1–29 (MLKVVGASWQKTRIGTYILIGAGLLVIGA). N-linked (GlcNAc...) asparagine glycans are attached at residues N229, N465, and N486.

Belongs to the phospholipase B-like family. In terms of tissue distribution, expressed in neural and glial progenitors prior to, but not after, differentiation. Not expressed in late third instar disks, but is expressed uniformly by early third instar disks, in the imaginal ring of the proventriculus and in the salivary gland.

Its subcellular location is the secreted. Functionally, putative phospholipase. Involved in the regulation of cellular plasticity in imaginal disks. This is Putative phospholipase B-like lamina ancestor (lama) from Drosophila melanogaster (Fruit fly).